The sequence spans 419 residues: C2 calcium-dependent domain-containing protein 4C (419 aa).

Disordered stretches follow at residues 1–96, 115–136, 151–225, and 247–300; these read MRKT…LASE, EDWTAEEATNADPQAQGAMSLP, AESP…SPFG, and VSQL…HTVK. Positions 75-94 are enriched in low complexity; it reads LASPGPRRAPRSPRLPAKLA. Residues 186–196 are compositionally biased toward gly residues; it reads KGNGGDGGSRE. The span at 212 to 225 shows a compositional bias: polar residues; sequence ESDTGSSAESSPFG. Phosphoserine is present on residues Ser259, Ser261, and Ser270. Residues 303–419 enclose the C2 domain; the sequence is TRGSVRLLAE…LPLTSLLPFL (117 aa).

This sequence belongs to the C2CD4 family.

This Mus musculus (Mouse) protein is C2 calcium-dependent domain-containing protein 4C (C2cd4c).